Here is a 355-residue protein sequence, read N- to C-terminus: MFTLSDFDFNLPPELIAQTALPERTASRLLEVDHTVEPARLVDRNFVELPSCIAPGDLLVFNDTRVLKARFFGQKASGGKIEVLIERVTGTHTALAQIRASKSPGAGTTLRLADAFDVTVGERVEPFFTLHFPQPCLTLIEQHGRLPLPPYIEHDADASDETRYQTVYASNPGAVAAPTAGLHFDLPLLERLDAMGVERATLTLHVGAGTFQPVRVENIAEHRMHSEWYDLPQSLVDKIAATRARGGNVIAVGTTSMRALEAAARSADEAGRPLAATQAETDIFITPGYRFRVVDRLVTNFHLPKSTLLMLVSAFAGVETIRAAYRHAIDQRYRFFSYGDAMLLTRRDTPEAPRA.

Belongs to the QueA family. Monomer.

Its subcellular location is the cytoplasm. It catalyses the reaction 7-aminomethyl-7-carbaguanosine(34) in tRNA + S-adenosyl-L-methionine = epoxyqueuosine(34) in tRNA + adenine + L-methionine + 2 H(+). It functions in the pathway tRNA modification; tRNA-queuosine biosynthesis. Its function is as follows. Transfers and isomerizes the ribose moiety from AdoMet to the 7-aminomethyl group of 7-deazaguanine (preQ1-tRNA) to give epoxyqueuosine (oQ-tRNA). The chain is S-adenosylmethionine:tRNA ribosyltransferase-isomerase from Burkholderia ambifaria (strain MC40-6).